The chain runs to 402 residues: tRNA(Met) cytidine acetate ligase (402 aa).

Residues 7–20 (ITEY…HELH), G102, N171, and R196 contribute to the ATP site.

It belongs to the TmcAL family.

It is found in the cytoplasm. It carries out the reaction cytidine(34) in elongator tRNA(Met) + acetate + ATP = N(4)-acetylcytidine(34) in elongator tRNA(Met) + AMP + diphosphate. Catalyzes the formation of N(4)-acetylcytidine (ac(4)C) at the wobble position of elongator tRNA(Met), using acetate and ATP as substrates. First activates an acetate ion to form acetyladenylate (Ac-AMP) and then transfers the acetyl group to tRNA to form ac(4)C34. This Clostridium perfringens (strain SM101 / Type A) protein is tRNA(Met) cytidine acetate ligase.